We begin with the raw amino-acid sequence, 393 residues long: Formate-dependent phosphoribosylglycinamide formyltransferase (393 aa).

Residues 22–23 and Glu-82 contribute to the N(1)-(5-phospho-beta-D-ribosyl)glycinamide site; that span reads EL. ATP contacts are provided by residues Arg-114, Lys-155, 160-165, 195-198, and Glu-203; these read SSGKGQ and EGFI. The ATP-grasp domain maps to 119 to 308; sequence RLAAEELGLP…EFALHARAIL (190 aa). Positions 267 and 279 each coordinate Mg(2+). N(1)-(5-phospho-beta-D-ribosyl)glycinamide is bound by residues Asp-286, Lys-356, and 363-364; that span reads RR.

It belongs to the PurK/PurT family. As to quaternary structure, homodimer.

The catalysed reaction is N(1)-(5-phospho-beta-D-ribosyl)glycinamide + formate + ATP = N(2)-formyl-N(1)-(5-phospho-beta-D-ribosyl)glycinamide + ADP + phosphate + H(+). The protein operates within purine metabolism; IMP biosynthesis via de novo pathway; N(2)-formyl-N(1)-(5-phospho-D-ribosyl)glycinamide from N(1)-(5-phospho-D-ribosyl)glycinamide (formate route): step 1/1. Its function is as follows. Involved in the de novo purine biosynthesis. Catalyzes the transfer of formate to 5-phospho-ribosyl-glycinamide (GAR), producing 5-phospho-ribosyl-N-formylglycinamide (FGAR). Formate is provided by PurU via hydrolysis of 10-formyl-tetrahydrofolate. The protein is Formate-dependent phosphoribosylglycinamide formyltransferase of Azotobacter vinelandii (strain DJ / ATCC BAA-1303).